Reading from the N-terminus, the 104-residue chain is U20-lycotoxin-Ls1a (104 aa).

The first 30 residues, M1–A30, serve as a signal peptide directing secretion. A WAP domain is found at G31 to S76. 5 disulfides stabilise this stretch: C34-C64, C42-C68, C51-C63, C52-C90, and C57-C72.

This sequence belongs to the venom protein 11 family. 02 (wap-2) subfamily. In terms of processing, contains 5 disulfide bonds. Expressed by the venom gland.

The protein localises to the secreted. Functionally, has antibacterial activity. This is U20-lycotoxin-Ls1a from Lycosa singoriensis (Wolf spider).